The chain runs to 493 residues: MDDRRTILMDRYEIGRQLGQGNFAKVYYARNLTSGQAVAIKMIDKEKVTRVGLMVQIKREISIMRLVKHPNILQLFEVMASKSKIYFVLEYAKGGELFKKISKGKFSEDVARRYFHQLISGIDYCHSRGVYHRDLKPENLLLDENESLKVSDFGLSALSESKRHDGLLHTTCGTPAYVAPEVLSRRGYDGAKADIWSCGVILFVLVSGYLPFHDTNLIEMYRKIAKAEYKCPRSFSAELKDLLYKILDPDPSTRISIPKIKRSAWYRKSSDVNALKSKHETGDKVYKGEATTSDTTECSIFEGNRASSRDKVYTNGEATTSDSPECSNSDGKQASLSLPNLNAFDIISLSTGFDLSNLFEERYGRREERFTTRQPAAAIFAKLNELARRFKLKIKKKENGVLRLVAPKEGIKGLLELDAEVFELAPSFHLVEFKKSNGDTIEYQKLMKEDIRPALKDIVWAWQGGQHQQPEQSMQGMQGEQQPSRLPSQQPQG.

A Protein kinase domain is found at 12-266 (YEIGRQLGQG…IPKIKRSAWY (255 aa)). Residues 18-26 (LGQGNFAKV) and Lys-41 contribute to the ATP site. The Proton acceptor role is filled by Asp-134. The tract at residues 152-181 (DFGLSALSESKRHDGLLHTTCGTPAYVAPE) is activation loop. A disordered region spans residues 311–332 (KVYTNGEATTSDSPECSNSDGK). Over residues 316-332 (GEATTSDSPECSNSDGK) the composition is skewed to polar residues. Residues 320-360 (TSDSPECSNSDGKQASLSLPNLNAFDIISLSTGFDLSNLFE) form the NAF domain. A PPI region spans residues 365-394 (RREERFTTRQPAAAIFAKLNELARRFKLKI). Residues 465-493 (GQHQQPEQSMQGMQGEQQPSRLPSQQPQG) form a disordered region.

It belongs to the protein kinase superfamily. CAMK Ser/Thr protein kinase family. SNF1 subfamily. It depends on Mn(2+) as a cofactor.

It carries out the reaction L-seryl-[protein] + ATP = O-phospho-L-seryl-[protein] + ADP + H(+). The enzyme catalyses L-threonyl-[protein] + ATP = O-phospho-L-threonyl-[protein] + ADP + H(+). In terms of biological role, CIPK serine-threonine protein kinases interact with CBL proteins. Binding of a CBL protein to the regulatory NAF domain of CIPK protein lead to the activation of the kinase in a calcium-dependent manner. The protein is CBL-interacting protein kinase 26 (CIPK26) of Oryza sativa subsp. japonica (Rice).